A 473-amino-acid chain; its full sequence is Photosystem II CP43 reaction center protein (473 aa).

Residues Met-1 to Glu-14 constitute a propeptide that is removed on maturation. The residue at position 15 (Thr-15) is an N-acetylthreonine. Thr-15 is subject to Phosphothreonine. 5 helical membrane-spanning segments follow: residues Leu-69–Ala-93, Leu-134–Asn-155, Lys-178–Thr-200, Lys-255–Ser-275, and Trp-291–Ala-312. A [CaMn4O5] cluster-binding site is contributed by Glu-367. Residues Arg-447–Pro-471 form a helical membrane-spanning segment.

This sequence belongs to the PsbB/PsbC family. PsbC subfamily. PSII is composed of 1 copy each of membrane proteins PsbA, PsbB, PsbC, PsbD, PsbE, PsbF, PsbH, PsbI, PsbJ, PsbK, PsbL, PsbM, PsbT, PsbX, PsbY, PsbZ, Psb30/Ycf12, at least 3 peripheral proteins of the oxygen-evolving complex and a large number of cofactors. It forms dimeric complexes. Requires Binds multiple chlorophylls and provides some of the ligands for the Ca-4Mn-5O cluster of the oxygen-evolving complex. It may also provide a ligand for a Cl- that is required for oxygen evolution. PSII binds additional chlorophylls, carotenoids and specific lipids. as cofactor.

It localises to the plastid. Its subcellular location is the chloroplast thylakoid membrane. Functionally, one of the components of the core complex of photosystem II (PSII). It binds chlorophyll and helps catalyze the primary light-induced photochemical processes of PSII. PSII is a light-driven water:plastoquinone oxidoreductase, using light energy to abstract electrons from H(2)O, generating O(2) and a proton gradient subsequently used for ATP formation. In Draba nemorosa (Woodland whitlowgrass), this protein is Photosystem II CP43 reaction center protein.